The primary structure comprises 68 residues: Protein SlyX homolog (68 aa).

This sequence belongs to the SlyX family.

This is Protein SlyX homolog from Pseudomonas fluorescens (strain SBW25).